Consider the following 123-residue polypeptide: Defensin beta 118 (123 aa).

The signal sequence occupies residues 1 to 19; the sequence is MKLLLLALPMLVLLPQVIP. Intrachain disulfides connect cysteine 27/cysteine 54, cysteine 34/cysteine 48, and cysteine 38/cysteine 55. A propeptide spanning residues 65-123 is cleaved from the precursor; sequence VPTTSPTPLSDSTRGVIDDILTVRFTTDYFEVSSKKNMVEESEVGQGTQTSLPNVHHSS. A disordered region spans residues 100–123; the sequence is KNMVEESEVGQGTQTSLPNVHHSS. A compositionally biased stretch (polar residues) spans 109 to 123; sequence GQGTQTSLPNVHHSS.

This sequence belongs to the beta-defensin family. In terms of processing, the three-dimensional structure formed by the three intramolecular disulfide bridges is indispensable for antimicrobial activity.

The protein localises to the secreted. In terms of biological role, host defense peptide that exhibits antimicrobial activity against both Gram-negative bacteria, such as E.coli and S.typhimurium, and Gram-positive bacteria, such as S.aureus and B.subtilis. Inhibits cell adhesion of E.coli on intestinal epithelial enterocytes. Causes rapid permeabilization of both the outer and inner membrane of E.coli, leading to morphological alterations on the bacterial surface. Binds to bacterial lipopolysaccharides (LPS) with high affinity, and may thereby be involved in immunoregulation through LPS neutralization. May contribute to epididymal innate immunity and protect the sperm against attack by microorganisms. This chain is Defensin beta 118 (DEFB118), found in Pongo pygmaeus (Bornean orangutan).